Reading from the N-terminus, the 433-residue chain is Adenylosuccinate synthetase (433 aa).

GTP contacts are provided by residues 11-17 (GDEGKGK) and 39-41 (GHT). Asp-12 functions as the Proton acceptor in the catalytic mechanism. Residues Asp-12 and Gly-39 each coordinate Mg(2+). IMP is bound by residues 12 to 15 (DEGK), 37 to 40 (NAGH), Thr-134, Arg-148, Asn-230, Thr-245, and Arg-309. The active-site Proton donor is His-40. Substrate is bound at residue 305-311 (VTTGRKR). Residues Arg-311, 337 to 339 (KLD), and 419 to 421 (GTG) each bind GTP.

It belongs to the adenylosuccinate synthetase family. As to quaternary structure, homodimer. Mg(2+) is required as a cofactor.

The protein resides in the cytoplasm. It catalyses the reaction IMP + L-aspartate + GTP = N(6)-(1,2-dicarboxyethyl)-AMP + GDP + phosphate + 2 H(+). It participates in purine metabolism; AMP biosynthesis via de novo pathway; AMP from IMP: step 1/2. In terms of biological role, plays an important role in the de novo pathway and in the salvage pathway of purine nucleotide biosynthesis. Catalyzes the first committed step in the biosynthesis of AMP from IMP. The protein is Adenylosuccinate synthetase of Saccharomyces cerevisiae (strain JAY291) (Baker's yeast).